Reading from the N-terminus, the 172-residue chain is Large ribosomal subunit protein uL10 (172 aa).

This sequence belongs to the universal ribosomal protein uL10 family. As to quaternary structure, part of the ribosomal stalk of the 50S ribosomal subunit. The N-terminus interacts with L11 and the large rRNA to form the base of the stalk. The C-terminus forms an elongated spine to which L12 dimers bind in a sequential fashion forming a multimeric L10(L12)X complex.

Forms part of the ribosomal stalk, playing a central role in the interaction of the ribosome with GTP-bound translation factors. The protein is Large ribosomal subunit protein uL10 of Nitrobacter winogradskyi (strain ATCC 25391 / DSM 10237 / CIP 104748 / NCIMB 11846 / Nb-255).